The chain runs to 253 residues: MADWNPSLYLQFDAERTRPAADLLSRIAHLQVEHVVDLGCGPGNSTRLLRAAWPLAAITGIDNSPAMLAQAAQALPDCEFIDADIARWRPAQPVDVIYANASLQWLADHETLFPHLVAQLAVNGTLAVQMPDNWQEPSHTLMRQVADEQGLPDRGRQPLLPPDAWYDMLTRQGCEVDIWRTTYFHPLASHQAISDWLQGTGLRPYLAGLDEQSRNAFLTRYVELLAEHYPLQCNGKVLLRFPRLFIVARKIDV.

This sequence belongs to the methyltransferase superfamily. Tam family.

The protein localises to the cytoplasm. The catalysed reaction is trans-aconitate + S-adenosyl-L-methionine = (E)-3-(methoxycarbonyl)pent-2-enedioate + S-adenosyl-L-homocysteine. In terms of biological role, catalyzes the S-adenosylmethionine monomethyl esterification of trans-aconitate. This chain is Trans-aconitate 2-methyltransferase, found in Klebsiella pneumoniae (strain 342).